A 164-amino-acid polypeptide reads, in one-letter code: Cell division protein SepF (164 aa).

The interval 21 to 71 (YQQGQQPAQQQQSPVQAVPTPAPAPQQQAKRAPVTPLHKPSTTTRNAAPAE) is disordered. Over residues 22–54 (QQGQQPAQQQQSPVQAVPTPAPAPQQQAKRAPV) the composition is skewed to low complexity.

The protein belongs to the SepF family. As to quaternary structure, homodimer. Interacts with FtsZ.

Its subcellular location is the cytoplasm. Its function is as follows. Cell division protein that is part of the divisome complex and is recruited early to the Z-ring. Probably stimulates Z-ring formation, perhaps through the cross-linking of FtsZ protofilaments. Its function overlaps with FtsA. This Clavibacter michiganensis subsp. michiganensis (strain NCPPB 382) protein is Cell division protein SepF.